Reading from the N-terminus, the 368-residue chain is Protein tesmin/TSO1-like CXC 8 (368 aa).

One can recognise a CRC domain in the interval 64–185 (KHKGCRCKQS…KCINCKNVSE (122 aa)).

This sequence belongs to the lin-54 family.

It localises to the nucleus. Plays a role in development of both male and female reproductive tissues. The sequence is that of Protein tesmin/TSO1-like CXC 8 (TCX8) from Arabidopsis thaliana (Mouse-ear cress).